Consider the following 428-residue polypeptide: BTB/POZ domain-containing protein KCTD16 (428 aa).

Residues 25–98 (EVVELNVGGQ…LRDRQVVLPD (74 aa)) enclose the BTB domain. The residue at position 112 (Tyr112) is a Phosphotyrosine. A phosphoserine mark is found at Ser130, Ser137, Ser143, and Ser146.

Homopentamer; forms an open pentamer. In contrast to other BTB domain-containing proteins, does not interact with CUL3. Interacts as a tetramer with GABRB1 and GABRB2.

The protein localises to the presynaptic cell membrane. It localises to the postsynaptic cell membrane. Its function is as follows. Auxiliary subunit of GABA-B receptors that determine the pharmacology and kinetics of the receptor response. Increases agonist potency and markedly alter the G-protein signaling of the receptors by accelerating onset and promoting desensitization. In Homo sapiens (Human), this protein is BTB/POZ domain-containing protein KCTD16 (KCTD16).